The following is a 198-amino-acid chain: dTTP/UTP pyrophosphatase (198 aa).

Asp-75 functions as the Proton acceptor in the catalytic mechanism.

Belongs to the Maf family. YhdE subfamily. A divalent metal cation is required as a cofactor.

Its subcellular location is the cytoplasm. It carries out the reaction dTTP + H2O = dTMP + diphosphate + H(+). The catalysed reaction is UTP + H2O = UMP + diphosphate + H(+). Functionally, nucleoside triphosphate pyrophosphatase that hydrolyzes dTTP and UTP. May have a dual role in cell division arrest and in preventing the incorporation of modified nucleotides into cellular nucleic acids. This chain is dTTP/UTP pyrophosphatase, found in Wolbachia pipientis wMel.